Consider the following 266-residue polypeptide: Tryptophan synthase alpha chain (266 aa).

Catalysis depends on proton acceptor residues Glu52 and Asp63.

Belongs to the TrpA family. Tetramer of two alpha and two beta chains.

It carries out the reaction (1S,2R)-1-C-(indol-3-yl)glycerol 3-phosphate + L-serine = D-glyceraldehyde 3-phosphate + L-tryptophan + H2O. It participates in amino-acid biosynthesis; L-tryptophan biosynthesis; L-tryptophan from chorismate: step 5/5. Its function is as follows. The alpha subunit is responsible for the aldol cleavage of indoleglycerol phosphate to indole and glyceraldehyde 3-phosphate. In Nocardia farcinica (strain IFM 10152), this protein is Tryptophan synthase alpha chain.